Reading from the N-terminus, the 252-residue chain is 5-oxoprolinase subunit A 1 (252 aa).

Belongs to the LamB/PxpA family. In terms of assembly, forms a complex composed of PxpA, PxpB and PxpC.

It catalyses the reaction 5-oxo-L-proline + ATP + 2 H2O = L-glutamate + ADP + phosphate + H(+). In terms of biological role, catalyzes the cleavage of 5-oxoproline to form L-glutamate coupled to the hydrolysis of ATP to ADP and inorganic phosphate. The protein is 5-oxoprolinase subunit A 1 of Pseudomonas putida (strain ATCC 47054 / DSM 6125 / CFBP 8728 / NCIMB 11950 / KT2440).